Consider the following 237-residue polypeptide: Phosphoribosylaminoimidazole-succinocarboxamide synthase (237 aa).

It belongs to the SAICAR synthetase family.

The catalysed reaction is 5-amino-1-(5-phospho-D-ribosyl)imidazole-4-carboxylate + L-aspartate + ATP = (2S)-2-[5-amino-1-(5-phospho-beta-D-ribosyl)imidazole-4-carboxamido]succinate + ADP + phosphate + 2 H(+). Its pathway is purine metabolism; IMP biosynthesis via de novo pathway; 5-amino-1-(5-phospho-D-ribosyl)imidazole-4-carboxamide from 5-amino-1-(5-phospho-D-ribosyl)imidazole-4-carboxylate: step 1/2. The protein is Phosphoribosylaminoimidazole-succinocarboxamide synthase of Photorhabdus laumondii subsp. laumondii (strain DSM 15139 / CIP 105565 / TT01) (Photorhabdus luminescens subsp. laumondii).